The following is a 228-amino-acid chain: Cytidylate kinase (228 aa).

ATP is bound at residue 10–18 (GPSGSGKGT).

The protein belongs to the cytidylate kinase family. Type 1 subfamily.

The protein resides in the cytoplasm. The enzyme catalyses CMP + ATP = CDP + ADP. The catalysed reaction is dCMP + ATP = dCDP + ADP. This is Cytidylate kinase from Acinetobacter baumannii (strain ACICU).